A 187-amino-acid chain; its full sequence is Hypoxanthine/guanine phosphoribosyltransferase (187 aa).

This sequence belongs to the purine/pyrimidine phosphoribosyltransferase family. Archaeal HPRT subfamily. Homodimer.

It localises to the cytoplasm. It catalyses the reaction IMP + diphosphate = hypoxanthine + 5-phospho-alpha-D-ribose 1-diphosphate. It carries out the reaction GMP + diphosphate = guanine + 5-phospho-alpha-D-ribose 1-diphosphate. It participates in purine metabolism; IMP biosynthesis via salvage pathway; IMP from hypoxanthine: step 1/1. In terms of biological role, catalyzes a salvage reaction resulting in the formation of IMP that is energically less costly than de novo synthesis. The chain is Hypoxanthine/guanine phosphoribosyltransferase from Methanopyrus kandleri (strain AV19 / DSM 6324 / JCM 9639 / NBRC 100938).